The following is a 766-amino-acid chain: ATP-dependent RNA helicase DBP4 (766 aa).

A compositionally biased stretch (basic residues) spans 1-18 (MGKKQNNRKVVKSQRKSH). The segment at 1 to 25 (MGKKQNNRKVVKSQRKSHREKEEET) is disordered. A Q motif motif is present at residues 46 to 74 (SQFSDLPISEETARGLKEASFASLTDIQK). The Helicase ATP-binding domain occupies 77-251 (IPISLKGEDV…RLSLANPKRV (175 aa)). 90–97 (AKTGSGKT) contacts ATP. A DEAD box motif is present at residues 199–202 (DEAD). Residues 265–437 (SLEQYYIKIP…TIRPQLQSLC (173 aa)) enclose the Helicase C-terminal domain. Disordered regions lie at residues 488–525 (KIKFKGGSDNKEKKNMSRQLAALSKSNNEGDVVPEEDK), 572–614 (KRQD…ANKL), and 649–752 (NKET…EPQT). 5 stretches are compositionally biased toward basic and acidic residues: residues 493 to 502 (GGSDNKEKKN), 572 to 581 (KRQDHELRDD), 660 to 671 (IEDKLTAKEKRQ), 678 to 687 (KEMEKNMRQE), and 709 to 738 (DRDLEHSSADEDVPEPKKPKWFDNDKNVNK). A compositionally biased stretch (acidic residues) spans 739 to 752 (DEDDGVVEYDEPQT).

This sequence belongs to the DEAD box helicase family. DDX10/DBP4 subfamily. As to quaternary structure, interacts with the U3 and U14 snoRNAs. Associates with pre-ribosomal complexes.

Its subcellular location is the nucleus. It localises to the nucleolus. It catalyses the reaction ATP + H2O = ADP + phosphate + H(+). In terms of biological role, ATP-dependent RNA helicase required for ribosome biogenesis. Involved in the release of U14 snoRNA in pre-ribosomal complexes. Required for pre-rRNA cleavage at site A2. The sequence is that of ATP-dependent RNA helicase DBP4 (DBP4) from Debaryomyces hansenii (strain ATCC 36239 / CBS 767 / BCRC 21394 / JCM 1990 / NBRC 0083 / IGC 2968) (Yeast).